A 282-amino-acid chain; its full sequence is MIIFEKQTDVKTYLKPFLQDQKTIGFVPTMGALHQGHLSLMKESLQNNDHTVVSIFVNPTQFNNPEDLKKYPRTLESDVEKIKLLNHKIIIYAPTVEDIYEGKTASKSFDYDGLELQMEGKHRPGHFDGVGTIVKKLFEIVNPTHAYFGEKDFQQLAIVRKLVQKNKINTKIVGCKILREANQLAMSSRNERLTADERTKAAMIYNTLAEAKKLFGTKSANEVTKWVTKTFENQSMFELEYFEITDEQTLLTCKRKNKNKKYRAFIAVFVNNIKLIDNISLK.

Position 30–37 (30–37) interacts with ATP; that stretch reads MGALHQGH. Histidine 37 acts as the Proton donor in catalysis. Residue glutamine 61 participates in (R)-pantoate binding. Position 61 (glutamine 61) interacts with beta-alanine. Position 149–152 (149–152) interacts with ATP; it reads GEKD. Residue glutamine 155 coordinates (R)-pantoate. ATP contacts are provided by residues leucine 178 and 186-189; that span reads MSSR.

This sequence belongs to the pantothenate synthetase family. As to quaternary structure, homodimer.

It localises to the cytoplasm. The catalysed reaction is (R)-pantoate + beta-alanine + ATP = (R)-pantothenate + AMP + diphosphate + H(+). It participates in cofactor biosynthesis; (R)-pantothenate biosynthesis; (R)-pantothenate from (R)-pantoate and beta-alanine: step 1/1. Functionally, catalyzes the condensation of pantoate with beta-alanine in an ATP-dependent reaction via a pantoyl-adenylate intermediate. In Flavobacterium psychrophilum (strain ATCC 49511 / DSM 21280 / CIP 103535 / JIP02/86), this protein is Pantothenate synthetase.